Reading from the N-terminus, the 465-residue chain is MARDNENILEEWCLIESNPCIFYDMLKRMGATEISVEDVYSLSYFDDYINNKEIINMNHILGVDTYLGENNKTLDKENNVVDVIELYKNNICMEDKYNKLLKHHSYIYGIIFLFNIGKHYKNNKYIEHNVPDNLFFAKQVIPNACATQAILSIVLNKDIELNDEIKNIKTFSLNFDSSMKGLTLSNCTFLRNIHNSYKPPIYLDKEDVHHDKKKSEDSFHFVSYISFQDKVYLLDGLQSGPVLINADEQNKPNPNNNNNNKDNDNDNNNNNNNNNNNNNNNNNNNNNNNNNNIGMNGKDWIEISREHIKKEIDEICNSQTNNDVRFNIIAVMKDKEYIIQEYINIHRIVKQRVNIKLINLGENIELSDEINEDEFPLLNDIPSIENLPNNVDTLYNIVNKSTLEINYLQSLLHEQKEIKKLWNKELTFKFFNFYPFIMSSLNLMAKHKLLKDAYQKEKLKNATKS.

One can recognise a UCH catalytic domain in the interval E11 to K333. The Nucleophile role is filled by C145. The Proton donor role is filled by H220. Residues I244–I293 form a disordered region. The span at K251–N292 shows a compositional bias: low complexity. In terms of domain architecture, ULD spans N432–K460.

It belongs to the peptidase C12 family.

The catalysed reaction is Thiol-dependent hydrolysis of ester, thioester, amide, peptide and isopeptide bonds formed by the C-terminal Gly of ubiquitin (a 76-residue protein attached to proteins as an intracellular targeting signal).. In terms of biological role, thiol protease that recognizes and hydrolyzes a peptide bond at the C-terminal glycine of either ubiquitin or NEDD8. This chain is Ubiquitin carboxyl-terminal hydrolase UCH54, found in Plasmodium falciparum (isolate 3D7).